Reading from the N-terminus, the 297-residue chain is Large ribosomal subunit protein uL18 (297 aa).

Residue G2 is modified to N-acetylglycine. K5 and K48 each carry N6-acetyllysine. S185 carries the post-translational modification Phosphoserine. An N6-acetyllysine; alternate modification is found at K220. Residue K220 forms a Glycyl lysine isopeptide (Lys-Gly) (interchain with G-Cter in SUMO1); alternate linkage. Residue K220 forms a Glycyl lysine isopeptide (Lys-Gly) (interchain with G-Cter in SUMO2); alternate linkage. T232 is subject to Phosphothreonine. Positions 253-297 (YEKKPKKEVKKKRWNRPKMSLAQKKDRVAQKKASFLRAQERAAES) are disordered. Basic residues predominate over residues 258-268 (KKEVKKKRWNR). S272 is modified (phosphoserine).

This sequence belongs to the universal ribosomal protein uL18 family. In terms of assembly, component of the large ribosomal subunit (LSU). Part of the 5S RNP complex, which is a LSU subcomplex composed of the 5S RNA, RPL5 and RPL11. Component of a hexameric 5S RNP precursor complex, composed of 5S RNA, RRS1, RPF2/BXDC1, RPL5, RPL11 and HEATR3; this complex acts as a precursor for ribosome assembly. Interacts with NVL in an ATP-dependent manner. Interacts with RRP1B. Interacts with IPO5, IPO7 and KPNB1; these interactions may be involved in RPL5 nuclear import for the assembly of ribosomal subunits. Interacts with RRP1B.

The protein localises to the cytoplasm. It is found in the nucleus. It localises to the nucleolus. Functionally, component of the ribosome, a large ribonucleoprotein complex responsible for the synthesis of proteins in the cell. The small ribosomal subunit (SSU) binds messenger RNAs (mRNAs) and translates the encoded message by selecting cognate aminoacyl-transfer RNA (tRNA) molecules. The large subunit (LSU) contains the ribosomal catalytic site termed the peptidyl transferase center (PTC), which catalyzes the formation of peptide bonds, thereby polymerizing the amino acids delivered by tRNAs into a polypeptide chain. The nascent polypeptides leave the ribosome through a tunnel in the LSU and interact with protein factors that function in enzymatic processing, targeting, and the membrane insertion of nascent chains at the exit of the ribosomal tunnel. As part of the 5S RNP/5S ribonucleoprotein particle it is an essential component of the LSU, required for its formation and the maturation of rRNAs. It also couples ribosome biogenesis to p53/TP53 activation. As part of the 5S RNP it accumulates in the nucleoplasm and inhibits MDM2, when ribosome biogenesis is perturbed, mediating the stabilization and the activation of TP53. The sequence is that of Large ribosomal subunit protein uL18 (RPL5) from Macaca fascicularis (Crab-eating macaque).